A 297-amino-acid chain; its full sequence is Glycerol-3-phosphate dehydrogenase [NAD(P)+] (297 aa).

NADPH contacts are provided by Trp-11, Arg-30, and Lys-79. Residues Lys-79, Gly-107, and Ser-109 each coordinate sn-glycerol 3-phosphate. Ala-111 serves as a coordination point for NADPH. 5 residues coordinate sn-glycerol 3-phosphate: Lys-161, Asp-214, Ser-224, Arg-225, and Asn-226. The Proton acceptor role is filled by Lys-161. Residue Arg-225 participates in NADPH binding. NADPH contacts are provided by Val-249 and Glu-251.

The protein belongs to the NAD-dependent glycerol-3-phosphate dehydrogenase family.

The protein localises to the cytoplasm. The catalysed reaction is sn-glycerol 3-phosphate + NAD(+) = dihydroxyacetone phosphate + NADH + H(+). The enzyme catalyses sn-glycerol 3-phosphate + NADP(+) = dihydroxyacetone phosphate + NADPH + H(+). The protein operates within membrane lipid metabolism; glycerophospholipid metabolism. In terms of biological role, catalyzes the reduction of the glycolytic intermediate dihydroxyacetone phosphate (DHAP) to sn-glycerol 3-phosphate (G3P), the key precursor for phospholipid synthesis. This is Glycerol-3-phosphate dehydrogenase [NAD(P)+] from Wolinella succinogenes (strain ATCC 29543 / DSM 1740 / CCUG 13145 / JCM 31913 / LMG 7466 / NCTC 11488 / FDC 602W) (Vibrio succinogenes).